The chain runs to 84 residues: Large ribosomal subunit protein bL27 (84 aa).

Residues 1-24 are disordered; that stretch reads MAHKKAGGSSRNGRDSKGQRLGCK.

Belongs to the bacterial ribosomal protein bL27 family.

This chain is Large ribosomal subunit protein bL27, found in Pelobacter propionicus (strain DSM 2379 / NBRC 103807 / OttBd1).